The primary structure comprises 323 residues: Beta-ketoacyl-[acyl-carrier-protein] synthase III (323 aa).

Active-site residues include Cys-113 and His-250. The tract at residues 251–255 is ACP-binding; it reads QANRR. Asn-280 is a catalytic residue.

Belongs to the thiolase-like superfamily. FabH family. As to quaternary structure, homodimer.

The protein localises to the cytoplasm. It carries out the reaction malonyl-[ACP] + acetyl-CoA + H(+) = 3-oxobutanoyl-[ACP] + CO2 + CoA. Its pathway is lipid metabolism; fatty acid biosynthesis. In terms of biological role, catalyzes the condensation reaction of fatty acid synthesis by the addition to an acyl acceptor of two carbons from malonyl-ACP. Catalyzes the first condensation reaction which initiates fatty acid synthesis and may therefore play a role in governing the total rate of fatty acid production. Possesses both acetoacetyl-ACP synthase and acetyl transacylase activities. Its substrate specificity determines the biosynthesis of branched-chain and/or straight-chain of fatty acids. This chain is Beta-ketoacyl-[acyl-carrier-protein] synthase III, found in Rhizobium johnstonii (strain DSM 114642 / LMG 32736 / 3841) (Rhizobium leguminosarum bv. viciae).